Reading from the N-terminus, the 377-residue chain is Histidinol-phosphate aminotransferase (377 aa).

Lysine 232 carries the post-translational modification N6-(pyridoxal phosphate)lysine.

This sequence belongs to the class-II pyridoxal-phosphate-dependent aminotransferase family. Histidinol-phosphate aminotransferase subfamily. In terms of assembly, homodimer. The cofactor is pyridoxal 5'-phosphate.

The enzyme catalyses L-histidinol phosphate + 2-oxoglutarate = 3-(imidazol-4-yl)-2-oxopropyl phosphate + L-glutamate. It participates in amino-acid biosynthesis; L-histidine biosynthesis; L-histidine from 5-phospho-alpha-D-ribose 1-diphosphate: step 7/9. The sequence is that of Histidinol-phosphate aminotransferase from Mycobacterium sp. (strain KMS).